A 162-amino-acid polypeptide reads, in one-letter code: Caveolin-2 (162 aa).

Over M1–K86 the chain is Cytoplasmic. Y19 carries the post-translational modification Phosphotyrosine; by SRC. S20 and S23 each carry phosphoserine. Phosphotyrosine; by SRC is present on Y27. An intramembrane region (helical) is located at residues F87–L107. Over S108–D162 the chain is Cytoplasmic.

Belongs to the caveolin family. As to quaternary structure, monomer or homodimer. Interacts with CAV1; the interaction forms a stable heterooligomeric complex that is required for targeting to lipid rafts and for caveolae formation. Tyrosine phosphorylated forms do not form heterooligomers with the Tyr-19-phosphorylated form existing as a monomer or dimer, and the Tyr-27-form as a monomer only. Interacts (tyrosine phosphorylated form) with the SH2 domain-containing proteins, RASA1, NCK1 and SRC. Interacts (tyrosine phosphorylated form) with INSR, the interaction (Tyr-27-phosphorylated form) is increased on insulin stimulation. Interacts (Tyr-19 phosphorylated form) with MAPK1 (phosphorylated form); the interaction, promoted by insulin, leads to nuclear location and MAPK1 activation. Interacts with STAT3; the interaction is increased on insulin-induced tyrosine phosphorylation leading to STAT activation. Post-translationally, phosphorylated on serine and tyrosine residues. CAV1 promotes phosphorylation on Ser-23 which then targets the complex to the plasma membrane, lipid rafts and caveolae. Phosphorylation on both Tyr-19 and Tyr-27 is required for insulin-induced 'Ser-727' phosphorylation of STAT3 and its activation. Phosphorylation on Tyr-19 is required for insulin-induced phosphorylation of MAPK1 and DNA binding of STAT3. Tyrosine phosphorylation is induced by both EGF and insulin.

Its subcellular location is the nucleus. It localises to the cytoplasm. It is found in the golgi apparatus membrane. The protein localises to the cell membrane. The protein resides in the membrane. Its subcellular location is the caveola. Its function is as follows. May act as a scaffolding protein within caveolar membranes. Interacts directly with G-protein alpha subunits and can functionally regulate their activity. Acts as an accessory protein in conjunction with CAV1 in targeting to lipid rafts and driving caveolae formation. Positive regulator of cellular mitogenesis of the MAPK signaling pathway. Required for the insulin-stimulated nuclear translocation and activation of MAPK1 and STAT3, and the subsequent regulation of cell cycle progression. This chain is Caveolin-2 (CAV2), found in Muntiacus muntjak (Barking deer).